Consider the following 949-residue polypeptide: Protein translocase subunit SecA (949 aa).

Residues glutamine 87, 105–109, and aspartate 524 contribute to the ATP site; that span reads GEGKT. Disordered stretches follow at residues 852–876 and 896–939; these read PPPG…SSGG and LEFS…GSGK. The Zn(2+) site is built by cysteine 933, cysteine 935, cysteine 944, and histidine 945.

The protein belongs to the SecA family. Monomer and homodimer. Part of the essential Sec protein translocation apparatus which comprises SecA, SecYEG and auxiliary proteins SecDF-YajC and YidC. Requires Zn(2+) as cofactor.

It localises to the cell inner membrane. Its subcellular location is the cytoplasm. The catalysed reaction is ATP + H2O + cellular proteinSide 1 = ADP + phosphate + cellular proteinSide 2.. Its function is as follows. Part of the Sec protein translocase complex. Interacts with the SecYEG preprotein conducting channel. Has a central role in coupling the hydrolysis of ATP to the transfer of proteins into and across the cell membrane, serving both as a receptor for the preprotein-SecB complex and as an ATP-driven molecular motor driving the stepwise translocation of polypeptide chains across the membrane. This is Protein translocase subunit SecA from Methylocella silvestris (strain DSM 15510 / CIP 108128 / LMG 27833 / NCIMB 13906 / BL2).